The primary structure comprises 237 residues: 2,3,4,5-tetrahydropyridine-2,6-dicarboxylate N-acetyltransferase (237 aa).

This sequence belongs to the transferase hexapeptide repeat family. DapH subfamily.

It catalyses the reaction (S)-2,3,4,5-tetrahydrodipicolinate + acetyl-CoA + H2O = L-2-acetamido-6-oxoheptanedioate + CoA. It functions in the pathway amino-acid biosynthesis; L-lysine biosynthesis via DAP pathway; LL-2,6-diaminopimelate from (S)-tetrahydrodipicolinate (acetylase route): step 1/3. Functionally, catalyzes the transfer of an acetyl group from acetyl-CoA to tetrahydrodipicolinate. The polypeptide is 2,3,4,5-tetrahydropyridine-2,6-dicarboxylate N-acetyltransferase (Alkaliphilus metalliredigens (strain QYMF)).